An 84-amino-acid polypeptide reads, in one-letter code: Small ribosomal subunit protein bS18 (84 aa).

It belongs to the bacterial ribosomal protein bS18 family. As to quaternary structure, part of the 30S ribosomal subunit. Forms a tight heterodimer with protein bS6.

Functionally, binds as a heterodimer with protein bS6 to the central domain of the 16S rRNA, where it helps stabilize the platform of the 30S subunit. This Vesicomyosocius okutanii subsp. Calyptogena okutanii (strain HA) protein is Small ribosomal subunit protein bS18.